A 577-amino-acid chain; its full sequence is Proline--tRNA ligase (577 aa).

Belongs to the class-II aminoacyl-tRNA synthetase family. ProS type 1 subfamily. Homodimer.

It is found in the cytoplasm. It carries out the reaction tRNA(Pro) + L-proline + ATP = L-prolyl-tRNA(Pro) + AMP + diphosphate. Functionally, catalyzes the attachment of proline to tRNA(Pro) in a two-step reaction: proline is first activated by ATP to form Pro-AMP and then transferred to the acceptor end of tRNA(Pro). As ProRS can inadvertently accommodate and process non-cognate amino acids such as alanine and cysteine, to avoid such errors it has two additional distinct editing activities against alanine. One activity is designated as 'pretransfer' editing and involves the tRNA(Pro)-independent hydrolysis of activated Ala-AMP. The other activity is designated 'posttransfer' editing and involves deacylation of mischarged Ala-tRNA(Pro). The misacylated Cys-tRNA(Pro) is not edited by ProRS. The sequence is that of Proline--tRNA ligase from Chlamydia caviae (strain ATCC VR-813 / DSM 19441 / 03DC25 / GPIC) (Chlamydophila caviae).